A 315-amino-acid chain; its full sequence is Ribose-phosphate pyrophosphokinase (315 aa).

ATP-binding positions include 37–39 and 96–97; these read DGE and RQ. Residues H131 and D170 each contribute to the Mg(2+) site. K194 is a catalytic residue. Residues R196, D220, and 224 to 228 each bind D-ribose 5-phosphate; that span reads DTGGT.

The protein belongs to the ribose-phosphate pyrophosphokinase family. Class I subfamily. Homohexamer. The cofactor is Mg(2+).

It localises to the cytoplasm. The catalysed reaction is D-ribose 5-phosphate + ATP = 5-phospho-alpha-D-ribose 1-diphosphate + AMP + H(+). It functions in the pathway metabolic intermediate biosynthesis; 5-phospho-alpha-D-ribose 1-diphosphate biosynthesis; 5-phospho-alpha-D-ribose 1-diphosphate from D-ribose 5-phosphate (route I): step 1/1. Its function is as follows. Involved in the biosynthesis of the central metabolite phospho-alpha-D-ribosyl-1-pyrophosphate (PRPP) via the transfer of pyrophosphoryl group from ATP to 1-hydroxyl of ribose-5-phosphate (Rib-5-P). The chain is Ribose-phosphate pyrophosphokinase from Buchnera aphidicola subsp. Schizaphis graminum (strain Sg).